A 420-amino-acid polypeptide reads, in one-letter code: DNA replication and repair protein RecF (420 aa).

30–37 serves as a coordination point for ATP; that stretch reads GRNGQGKT. The disordered stretch occupies residues 175–214; sequence RKGGFARKGGFAPLGPPEGRPEGPPEGRTGGSATSGPPSR.

The protein belongs to the RecF family.

The protein resides in the cytoplasm. The RecF protein is involved in DNA metabolism; it is required for DNA replication and normal SOS inducibility. RecF binds preferentially to single-stranded, linear DNA. It also seems to bind ATP. This is DNA replication and repair protein RecF from Nocardioides sp. (strain ATCC BAA-499 / JS614).